We begin with the raw amino-acid sequence, 407 residues long: Putative glucose/galactose transporter (407 aa).

A run of 12 helical transmembrane segments spans residues 11–31 (GSLT…DILI), 47–67 (LIQF…GNVI), 70–90 (IGYP…CALF), 96–116 (FGSY…IVCL), 139–159 (VQAF…LLIF), 180–200 (VQMP…IMYL), 225–245 (FVFG…IGSF), 263–283 (HYLV…SVLM), 300–320 (IVLI…ALTF), 321–341 (VGFF…LNLG), 349–369 (GVIS…GAVT), and 378–398 (NLLY…FFAL).

Belongs to the major facilitator superfamily. FHS transporter (TC 2.A.1.7) family.

Its subcellular location is the cell inner membrane. Functionally, intake of glucose and galactose. This Helicobacter pylori (strain ATCC 700392 / 26695) (Campylobacter pylori) protein is Putative glucose/galactose transporter (gluP).